A 336-amino-acid chain; its full sequence is Acetyl-coenzyme A carboxylase carboxyl transferase subunit alpha (336 aa).

The 261-residue stretch at 48–308 (ALEAKVESLR…KSMLIEELQG (261 aa)) folds into the CoA carboxyltransferase C-terminal domain.

Belongs to the AccA family. Acetyl-CoA carboxylase is a heterohexamer composed of biotin carboxyl carrier protein (AccB), biotin carboxylase (AccC) and two subunits each of ACCase subunit alpha (AccA) and ACCase subunit beta (AccD).

The protein resides in the cytoplasm. It carries out the reaction N(6)-carboxybiotinyl-L-lysyl-[protein] + acetyl-CoA = N(6)-biotinyl-L-lysyl-[protein] + malonyl-CoA. It functions in the pathway lipid metabolism; malonyl-CoA biosynthesis; malonyl-CoA from acetyl-CoA: step 1/1. Component of the acetyl coenzyme A carboxylase (ACC) complex. First, biotin carboxylase catalyzes the carboxylation of biotin on its carrier protein (BCCP) and then the CO(2) group is transferred by the carboxyltransferase to acetyl-CoA to form malonyl-CoA. The chain is Acetyl-coenzyme A carboxylase carboxyl transferase subunit alpha from Chlorobaculum parvum (strain DSM 263 / NCIMB 8327) (Chlorobium vibrioforme subsp. thiosulfatophilum).